The following is a 270-amino-acid chain: MANPFVKAWKYLMALFSSKIDEHADPKVQIQQAIEEAQRTHQALTQQAAQVIGNQRQLEMRLNRQLADIEKLQVNVRQALTLADQATAAGDAAKATEYNNAAEAFAAQLVTAEQSVEDLKTLHDQALSAAAQAKKAVERNAMVLQQKIAERTKLLSQLEQAKMQEQVSASLRSMSELAAPGNTPSLDEVRDKIERRYANAIGSAELAESSVQGRMLEVEQAGIQMAGHSRLEQIRASMRGEALPAGGTTATPRPATETSGGAIAEQPYGQ.

The segment at 238-270 (MRGEALPAGGTTATPRPATETSGGAIAEQPYGQ) is disordered. Over residues 240-258 (GEALPAGGTTATPRPATET) the composition is skewed to low complexity.

This sequence belongs to the PspA/Vipp/IM30 family.

It localises to the cytoplasm. Involved in resistance to stress. Associates with and regulates lipid droplets (LDs) homeostasis under conditions of stress and may regulate non-replicating persistence (NRP). Could be involved in preservation of envelope integrity and tolerance to surface stress. In Mycobacterium tuberculosis (strain ATCC 25177 / H37Ra), this protein is PspA protein.